The following is a 437-amino-acid chain: Ribosomal protein uS12 methylthiotransferase RimO (437 aa).

The MTTase N-terminal domain occupies 9-124 (TKVNIVTLGC…LPAILKKFRA (116 aa)). [4Fe-4S] cluster is bound by residues cysteine 18, cysteine 56, cysteine 90, cysteine 151, cysteine 155, and cysteine 158. The Radical SAM core domain maps to 137–367 (TTPSHYAYVK…MSIQEGISAE (231 aa)). The 68-residue stretch at 370 to 437 (EKKIGNTYKV…EFDLFGEIVK (68 aa)) folds into the TRAM domain.

Belongs to the methylthiotransferase family. RimO subfamily. The cofactor is [4Fe-4S] cluster.

It localises to the cytoplasm. It catalyses the reaction L-aspartate(89)-[ribosomal protein uS12]-hydrogen + (sulfur carrier)-SH + AH2 + 2 S-adenosyl-L-methionine = 3-methylsulfanyl-L-aspartate(89)-[ribosomal protein uS12]-hydrogen + (sulfur carrier)-H + 5'-deoxyadenosine + L-methionine + A + S-adenosyl-L-homocysteine + 2 H(+). Catalyzes the methylthiolation of an aspartic acid residue of ribosomal protein uS12. The protein is Ribosomal protein uS12 methylthiotransferase RimO of Cytophaga hutchinsonii (strain ATCC 33406 / DSM 1761 / CIP 103989 / NBRC 15051 / NCIMB 9469 / D465).